Consider the following 248-residue polypeptide: 2,3-bisphosphoglycerate-dependent phosphoglycerate mutase (248 aa).

Substrate is bound by residues 8–15 (RHGESEWN), 21–22 (TG), arginine 60, 87–90 (ERHY), lysine 98, 114–115 (RR), and 183–184 (GN). The Tele-phosphohistidine intermediate role is filled by histidine 9. Glutamate 87 serves as the catalytic Proton donor/acceptor.

The protein belongs to the phosphoglycerate mutase family. BPG-dependent PGAM subfamily.

It catalyses the reaction (2R)-2-phosphoglycerate = (2R)-3-phosphoglycerate. The protein operates within carbohydrate degradation; glycolysis; pyruvate from D-glyceraldehyde 3-phosphate: step 3/5. Its function is as follows. Catalyzes the interconversion of 2-phosphoglycerate and 3-phosphoglycerate. In Borrelia hermsii (strain HS1 / DAH), this protein is 2,3-bisphosphoglycerate-dependent phosphoglycerate mutase.